The sequence spans 199 residues: Peptidyl-tRNA hydrolase (199 aa).

Tyr-15 contributes to the tRNA binding site. His-20 (proton acceptor) is an active-site residue. TRNA-binding residues include Tyr-66, Asn-68, and Asn-114.

It belongs to the PTH family. Monomer.

It localises to the cytoplasm. It catalyses the reaction an N-acyl-L-alpha-aminoacyl-tRNA + H2O = an N-acyl-L-amino acid + a tRNA + H(+). In terms of biological role, hydrolyzes ribosome-free peptidyl-tRNAs (with 1 or more amino acids incorporated), which drop off the ribosome during protein synthesis, or as a result of ribosome stalling. Catalyzes the release of premature peptidyl moieties from peptidyl-tRNA molecules trapped in stalled 50S ribosomal subunits, and thus maintains levels of free tRNAs and 50S ribosomes. The sequence is that of Peptidyl-tRNA hydrolase from Burkholderia ambifaria (strain MC40-6).